Consider the following 221-residue polypeptide: Prolactin-3B1 (221 aa).

Residues 1–30 (MQLPLTPLSFSGTLLLMAMSNFLLWEHVTS) form the signal peptide. Intrachain disulfides connect cysteine 81/cysteine 196 and cysteine 213/cysteine 221.

It belongs to the somatotropin/prolactin family.

It localises to the secreted. This is Prolactin-3B1 (PRL3B1) from Mesocricetus auratus (Golden hamster).